A 318-amino-acid chain; its full sequence is NADH-ubiquinone oxidoreductase chain 1 (318 aa).

8 consecutive transmembrane segments (helical) span residues 1 to 21, 71 to 91, 101 to 121, 145 to 165, 172 to 192, 224 to 244, 253 to 273, and 294 to 314; these read MLPITNSLTYIIPILIAVAFL, LLILSPILALTTAMLIWTPIP, LGLLSILAISSMAVNSTLWAG, VTLGIILLSILILTGGFTMQL, HIWLLTTSWPLTMMWFISTLA, FFLAEYTNIISMNLLTCIMFI, ELFLINLVTKTLLLSLTFLWI, and LPLTMALCLLQASLLVSISGI.

This sequence belongs to the complex I subunit 1 family.

The protein localises to the mitochondrion inner membrane. The catalysed reaction is a ubiquinone + NADH + 5 H(+)(in) = a ubiquinol + NAD(+) + 4 H(+)(out). Its function is as follows. Core subunit of the mitochondrial membrane respiratory chain NADH dehydrogenase (Complex I) that is believed to belong to the minimal assembly required for catalysis. Complex I functions in the transfer of electrons from NADH to the respiratory chain. The immediate electron acceptor for the enzyme is believed to be ubiquinone. The sequence is that of NADH-ubiquinone oxidoreductase chain 1 (MT-ND1) from Varanus rudicollis (Rough-necked monitor lizard).